The chain runs to 405 residues: Tyrosine--tRNA ligase (405 aa).

The 'HIGH' region signature appears at 46–55 (PTRPDIHLGH). The 'KMSKS' region motif lies at 230–234 (KMSKS). Lys-233 is an ATP binding site. Residues 341–404 (MGLAALMVKA…GKKKFVKIVV (64 aa)) form the S4 RNA-binding domain.

This sequence belongs to the class-I aminoacyl-tRNA synthetase family. TyrS type 2 subfamily. In terms of assembly, homodimer.

The protein localises to the cytoplasm. It carries out the reaction tRNA(Tyr) + L-tyrosine + ATP = L-tyrosyl-tRNA(Tyr) + AMP + diphosphate + H(+). Functionally, catalyzes the attachment of tyrosine to tRNA(Tyr) in a two-step reaction: tyrosine is first activated by ATP to form Tyr-AMP and then transferred to the acceptor end of tRNA(Tyr). This chain is Tyrosine--tRNA ligase, found in Bdellovibrio bacteriovorus (strain ATCC 15356 / DSM 50701 / NCIMB 9529 / HD100).